The chain runs to 98 residues: NADH-ubiquinone oxidoreductase chain 4L (98 aa).

3 helical membrane-spanning segments follow: residues 1 to 21 (MTLIHMNVLMAFSMSLVGLLM), 29 to 49 (ALLCLEGMMLSLFTLAALTIL), and 61 to 81 (IILLVFAACEAAIGLALLVMV).

The protein belongs to the complex I subunit 4L family. In terms of assembly, core subunit of respiratory chain NADH dehydrogenase (Complex I) which is composed of 45 different subunits.

The protein localises to the mitochondrion inner membrane. It carries out the reaction a ubiquinone + NADH + 5 H(+)(in) = a ubiquinol + NAD(+) + 4 H(+)(out). In terms of biological role, core subunit of the mitochondrial membrane respiratory chain NADH dehydrogenase (Complex I) which catalyzes electron transfer from NADH through the respiratory chain, using ubiquinone as an electron acceptor. Part of the enzyme membrane arm which is embedded in the lipid bilayer and involved in proton translocation. The polypeptide is NADH-ubiquinone oxidoreductase chain 4L (MT-ND4L) (Balaenoptera borealis (Sei whale)).